We begin with the raw amino-acid sequence, 370 residues long: MSFNTFGHLFRVTTFGESHGAAIGCVVDGCPPNLRFTLEDVQAALDRRRPGQSRFTTQRREPDQVKVLSGTLEHPEGGLVTTGTPIALLIENVDQRSKDYADIAGAYRPGHADFTYDIKYGIRDHRGGGRSSARETATRVAAGAIAAKVLPGVTVRGAVVRIGEIEIDRSRWDWNEVPNNPFFCPDPKTVPLWEEYLDAVRKAGSSIGAVVELVAEGVPAGLGAPLYGKLDADLASALLGINAAKGVEIGEGFNAAQLTGEENADEMRLGNEGRPQFLSNHAGGILGGIATGAPIVARFALKPTSSILTPRQTVDRTGQETEIFTKGRHDPCVGIRAVPVGEAMMWCVLADHFLRHRGQVGESVAWPFKG.

NADP(+) contacts are provided by arginine 48 and arginine 54. FMN-binding positions include 130-132, 242-243, glycine 287, 302-306, and arginine 328; these read RSS, NA, and KPTSS.

It belongs to the chorismate synthase family. In terms of assembly, homotetramer. The cofactor is FMNH2.

It catalyses the reaction 5-O-(1-carboxyvinyl)-3-phosphoshikimate = chorismate + phosphate. The protein operates within metabolic intermediate biosynthesis; chorismate biosynthesis; chorismate from D-erythrose 4-phosphate and phosphoenolpyruvate: step 7/7. Catalyzes the anti-1,4-elimination of the C-3 phosphate and the C-6 proR hydrogen from 5-enolpyruvylshikimate-3-phosphate (EPSP) to yield chorismate, which is the branch point compound that serves as the starting substrate for the three terminal pathways of aromatic amino acid biosynthesis. This reaction introduces a second double bond into the aromatic ring system. In Xanthobacter autotrophicus (strain ATCC BAA-1158 / Py2), this protein is Chorismate synthase.